A 160-amino-acid polypeptide reads, in one-letter code: Transcription elongation factor GreA (160 aa).

The protein belongs to the GreA/GreB family.

Its function is as follows. Necessary for efficient RNA polymerase transcription elongation past template-encoded arresting sites. The arresting sites in DNA have the property of trapping a certain fraction of elongating RNA polymerases that pass through, resulting in locked ternary complexes. Cleavage of the nascent transcript by cleavage factors such as GreA or GreB allows the resumption of elongation from the new 3'terminus. GreA releases sequences of 2 to 3 nucleotides. The sequence is that of Transcription elongation factor GreA from Francisella philomiragia subsp. philomiragia (strain ATCC 25017 / CCUG 19701 / FSC 153 / O#319-036).